The primary structure comprises 324 residues: tRNA-modifying protein YgfZ (324 aa).

A folate-binding site is contributed by tryptophan 184.

Belongs to the tRNA-modifying YgfZ family.

It localises to the cytoplasm. Folate-binding protein involved in regulating the level of ATP-DnaA and in the modification of some tRNAs. It is probably a key factor in regulatory networks that act via tRNA modification, such as initiation of chromosomal replication. The polypeptide is tRNA-modifying protein YgfZ (Vibrio vulnificus (strain YJ016)).